The sequence spans 58 residues: Large ribosomal subunit protein uL30 (58 aa).

The protein belongs to the universal ribosomal protein uL30 family. As to quaternary structure, part of the 50S ribosomal subunit.

This is Large ribosomal subunit protein uL30 from Pseudomonas fluorescens (strain ATCC BAA-477 / NRRL B-23932 / Pf-5).